The primary structure comprises 43 residues: Protein PsbN (43 aa).

A helical transmembrane segment spans residues 5-27 (TFITIFISCLLVSVTGYALYTAF).

It belongs to the PsbN family.

It is found in the plastid. The protein localises to the chloroplast thylakoid membrane. Its function is as follows. May play a role in photosystem I and II biogenesis. The protein is Protein PsbN of Chara vulgaris (Common stonewort).